A 314-amino-acid chain; its full sequence is Malate dehydrogenase (314 aa).

NAD(+) contacts are provided by residues 11 to 16 (GSGNIG) and D35. 2 residues coordinate substrate: R84 and R90. Residues N97 and 120-122 (ITN) each bind NAD(+). Substrate is bound by residues N122 and R153. H177 acts as the Proton acceptor in catalysis.

This sequence belongs to the LDH/MDH superfamily. MDH type 3 family.

The catalysed reaction is (S)-malate + NAD(+) = oxaloacetate + NADH + H(+). Catalyzes the reversible oxidation of malate to oxaloacetate. The protein is Malate dehydrogenase of Rickettsia conorii (strain ATCC VR-613 / Malish 7).